The chain runs to 484 residues: Glutamate--tRNA ligase (484 aa).

Positions 11-21 (PSPTGYLHIGN) match the 'HIGH' region motif. Positions 252 to 256 (KLSKR) match the 'KMSKS' region motif. Residue Lys255 coordinates ATP.

It belongs to the class-I aminoacyl-tRNA synthetase family. Glutamate--tRNA ligase type 1 subfamily. In terms of assembly, monomer.

The protein localises to the cytoplasm. It carries out the reaction tRNA(Glu) + L-glutamate + ATP = L-glutamyl-tRNA(Glu) + AMP + diphosphate. Functionally, catalyzes the attachment of glutamate to tRNA(Glu) in a two-step reaction: glutamate is first activated by ATP to form Glu-AMP and then transferred to the acceptor end of tRNA(Glu). In Staphylococcus aureus (strain MRSA252), this protein is Glutamate--tRNA ligase.